A 596-amino-acid chain; its full sequence is Putative terpene synthase 3, chloroplastic (596 aa).

The transit peptide at 1-46 (MATLSMQVSTLSKQVKNLNTFGMGSASKLPMVARRVSTIRLRPICS) directs the protein to the chloroplast. D349 and D353 together coordinate Mn(2+). The DDXXD motif signature appears at 349 to 353 (DDVYD). Homodimerization stretches follow at residues 355-361 (YGTLDEL) and 427-464 (EAKW…FTLP). Mn(2+) contacts are provided by D493 and E501.

Belongs to the terpene synthase family. In terms of assembly, homodimer. Mn(2+) serves as cofactor. Requires Mg(2+) as cofactor.

The protein localises to the plastid. It is found in the chloroplast. It functions in the pathway secondary metabolite biosynthesis; terpenoid biosynthesis. Putative monoterpene synthase. The polypeptide is Putative terpene synthase 3, chloroplastic (Thymus vulgaris (Thyme)).